Reading from the N-terminus, the 254-residue chain is Adenosylcobinamide-GDP ribazoletransferase (254 aa).

6 consecutive transmembrane segments (helical) span residues Phe-28–Leu-48, Ile-62–Ile-81, Val-109–Leu-129, Val-138–Val-158, Leu-179–Gly-199, and Ala-200–Trp-220.

The protein belongs to the CobS family. It depends on Mg(2+) as a cofactor.

The protein localises to the cell membrane. It catalyses the reaction alpha-ribazole + adenosylcob(III)inamide-GDP = adenosylcob(III)alamin + GMP + H(+). The enzyme catalyses alpha-ribazole 5'-phosphate + adenosylcob(III)inamide-GDP = adenosylcob(III)alamin 5'-phosphate + GMP + H(+). Its pathway is cofactor biosynthesis; adenosylcobalamin biosynthesis; adenosylcobalamin from cob(II)yrinate a,c-diamide: step 7/7. Joins adenosylcobinamide-GDP and alpha-ribazole to generate adenosylcobalamin (Ado-cobalamin). Also synthesizes adenosylcobalamin 5'-phosphate from adenosylcobinamide-GDP and alpha-ribazole 5'-phosphate. In Haloquadratum walsbyi (strain DSM 16790 / HBSQ001), this protein is Adenosylcobinamide-GDP ribazoletransferase.